The chain runs to 631 residues: Phosphomethylpyrimidine synthase (631 aa).

Substrate is bound by residues Asn-239, Met-268, Tyr-297, His-333, 353–355, 394–397, and Glu-433; these read SRG and DGLR. His-437 is a Zn(2+) binding site. Tyr-460 is a binding site for substrate. His-501 is a binding site for Zn(2+). The [4Fe-4S] cluster site is built by Cys-581, Cys-584, and Cys-589.

This sequence belongs to the ThiC family. In terms of assembly, homodimer. The cofactor is [4Fe-4S] cluster.

It carries out the reaction 5-amino-1-(5-phospho-beta-D-ribosyl)imidazole + S-adenosyl-L-methionine = 4-amino-2-methyl-5-(phosphooxymethyl)pyrimidine + CO + 5'-deoxyadenosine + formate + L-methionine + 3 H(+). It functions in the pathway cofactor biosynthesis; thiamine diphosphate biosynthesis. In terms of biological role, catalyzes the synthesis of the hydroxymethylpyrimidine phosphate (HMP-P) moiety of thiamine from aminoimidazole ribotide (AIR) in a radical S-adenosyl-L-methionine (SAM)-dependent reaction. The chain is Phosphomethylpyrimidine synthase from Salmonella arizonae (strain ATCC BAA-731 / CDC346-86 / RSK2980).